The following is a 554-amino-acid chain: MTRLDNARIVRAPRGPALTAKSWLTEAPLRMLMNNLDPDVAERPGDLVVYGGIGRAARDWASFDRIVAALKDLDEDQTLLVQSGKPVGIFRTHPDAPRVLIANSNLVPHWATWAHFHELDRKGLMMYGQMTAGSWIYIGSQGIVQGTYETFVEMGRQHYGGDLAGRWILTAGLGGMGGAQPLAATMAGASCLAVECRASSIEFRLRTGYVDVQARDLDEALALIDESCRARVPRSVALIGNAAEVFAEIQRRGVRPDCVTDQTSAHDPVNGYLPRGWSIAEWEARRESDPDGVAAAAKRSMAEQVRVMLAFHRAGVPTVDYGNNIRQMALEEGVADAFAFPGFVPAYIRPLFCRGVGPFRWCALSGDPEDIYRTDAKVKQLLPDNAHLHRWLDMARDKIRFQGLPARICWVGLGDRHRLGLAFNAMVRSGELKAPIVIGRDHLDSGSVASPNRETEAMRDGSDAVSDWPLLNALLNTASGATWVSLHHGGGVGMGFSQHAGMVIVCDGSEAADRRLERVLWNDPATGVMRHADAGYPEAIACAREQGLVLPSLG.

NAD(+) contacts are provided by residues 51–52 (GG), glutamine 129, 175–177 (GMG), glutamate 195, 241–242 (NA), 262–266 (QTSAH), 272–273 (YL), and tyrosine 321. Cysteine 409 is a catalytic residue. Glycine 491 contacts NAD(+).

This sequence belongs to the urocanase family. Requires NAD(+) as cofactor.

It is found in the cytoplasm. It catalyses the reaction 4-imidazolone-5-propanoate = trans-urocanate + H2O. It participates in amino-acid degradation; L-histidine degradation into L-glutamate; N-formimidoyl-L-glutamate from L-histidine: step 2/3. Catalyzes the conversion of urocanate to 4-imidazolone-5-propionate. This Methylobacterium nodulans (strain LMG 21967 / CNCM I-2342 / ORS 2060) protein is Urocanate hydratase.